The sequence spans 88 residues: UPF0297 protein RBAM_024500 (88 aa).

It belongs to the UPF0297 family.

This Bacillus velezensis (strain DSM 23117 / BGSC 10A6 / LMG 26770 / FZB42) (Bacillus amyloliquefaciens subsp. plantarum) protein is UPF0297 protein RBAM_024500.